The primary structure comprises 369 residues: tRNA/tmRNA (uracil-C(5))-methyltransferase (369 aa).

Gln193, Tyr221, Asn226, Glu242, and Asp302 together coordinate S-adenosyl-L-methionine. Residue Cys327 is the Nucleophile of the active site. The active-site Proton acceptor is the Glu361.

The protein belongs to the class I-like SAM-binding methyltransferase superfamily. RNA M5U methyltransferase family. TrmA subfamily.

The catalysed reaction is uridine(54) in tRNA + S-adenosyl-L-methionine = 5-methyluridine(54) in tRNA + S-adenosyl-L-homocysteine + H(+). It carries out the reaction uridine(341) in tmRNA + S-adenosyl-L-methionine = 5-methyluridine(341) in tmRNA + S-adenosyl-L-homocysteine + H(+). Its function is as follows. Dual-specificity methyltransferase that catalyzes the formation of 5-methyluridine at position 54 (m5U54) in all tRNAs, and that of position 341 (m5U341) in tmRNA (transfer-mRNA). The polypeptide is tRNA/tmRNA (uracil-C(5))-methyltransferase (Actinobacillus succinogenes (strain ATCC 55618 / DSM 22257 / CCUG 43843 / 130Z)).